Here is a 343-residue protein sequence, read N- to C-terminus: D-alanine--D-alanine ligase (343 aa).

The region spanning 129-335 (KYVLENFGVK…YGELISEIIE (207 aa)) is the ATP-grasp domain. 162–217 (ENKLGYDVFIKPSNSGSSVGISKAHNREELEAGLEEALKFDRKVLVEVALNAREIE) serves as a coordination point for ATP. Mg(2+) contacts are provided by Asp-288, Glu-302, and Asn-304.

The protein belongs to the D-alanine--D-alanine ligase family. Mg(2+) is required as a cofactor. The cofactor is Mn(2+).

Its subcellular location is the cytoplasm. The catalysed reaction is 2 D-alanine + ATP = D-alanyl-D-alanine + ADP + phosphate + H(+). It participates in cell wall biogenesis; peptidoglycan biosynthesis. Functionally, cell wall formation. This chain is D-alanine--D-alanine ligase, found in Clostridium novyi (strain NT).